Consider the following 147-residue polypeptide: Large ribosomal subunit protein uL13 (147 aa).

Belongs to the universal ribosomal protein uL13 family. Part of the 50S ribosomal subunit.

In terms of biological role, this protein is one of the early assembly proteins of the 50S ribosomal subunit, although it is not seen to bind rRNA by itself. It is important during the early stages of 50S assembly. This chain is Large ribosomal subunit protein uL13, found in Levilactobacillus brevis (strain ATCC 367 / BCRC 12310 / CIP 105137 / JCM 1170 / LMG 11437 / NCIMB 947 / NCTC 947) (Lactobacillus brevis).